A 287-amino-acid chain; its full sequence is Bifunctional protein FolD (287 aa).

NADP(+)-binding positions include 166–168 (GAS) and Ile-232.

This sequence belongs to the tetrahydrofolate dehydrogenase/cyclohydrolase family. As to quaternary structure, homodimer.

The enzyme catalyses (6R)-5,10-methylene-5,6,7,8-tetrahydrofolate + NADP(+) = (6R)-5,10-methenyltetrahydrofolate + NADPH. It catalyses the reaction (6R)-5,10-methenyltetrahydrofolate + H2O = (6R)-10-formyltetrahydrofolate + H(+). It participates in one-carbon metabolism; tetrahydrofolate interconversion. In terms of biological role, catalyzes the oxidation of 5,10-methylenetetrahydrofolate to 5,10-methenyltetrahydrofolate and then the hydrolysis of 5,10-methenyltetrahydrofolate to 10-formyltetrahydrofolate. The sequence is that of Bifunctional protein FolD from Aeromonas salmonicida (strain A449).